Reading from the N-terminus, the 419-residue chain is MDKLIIRGGRPLNGDVRISGAKNAVLPILASTLLADSPMTIGNVPHLQDVTTTMELLGRMGASLTVDERMHIEVDPTTTHDFVAPYELVKTMRASILVLGPMLARFGQAEVSMPGGCAIGSRPVNLHVDGLAAMGADISIDSGYIRARADRLKGARIVMDIVSVTGTENLMMAAALARGTTVIENAAREPEVVDLANCINTMGGQISGAGTDTIVIDGVETLHGCHYDVLPDRIETGTFLVAGAITGGKVRLRNTAPATLDAVLAKLEEAGAQMNIGEDWIELDMVGRRPRSVGLRTAPYPAFPTDMQAQFMALNSVAEGTAAIVETVFENRFMHALELQRMGADIRVEGNTALVRGVPKLTGAPVMATDLRASASLILAGLVAEGETLVDRIYHIDRGYECIEEKLSQLGASIRRVPG.

Position 22–23 (lysine 22–asparagine 23) interacts with phosphoenolpyruvate. Arginine 93 contributes to the UDP-N-acetyl-alpha-D-glucosamine binding site. Cysteine 117 serves as the catalytic Proton donor. Cysteine 117 bears the 2-(S-cysteinyl)pyruvic acid O-phosphothioketal mark. Positions 306 and 328 each coordinate UDP-N-acetyl-alpha-D-glucosamine.

Belongs to the EPSP synthase family. MurA subfamily.

It is found in the cytoplasm. It catalyses the reaction phosphoenolpyruvate + UDP-N-acetyl-alpha-D-glucosamine = UDP-N-acetyl-3-O-(1-carboxyvinyl)-alpha-D-glucosamine + phosphate. It participates in cell wall biogenesis; peptidoglycan biosynthesis. In terms of biological role, cell wall formation. Adds enolpyruvyl to UDP-N-acetylglucosamine. The chain is UDP-N-acetylglucosamine 1-carboxyvinyltransferase from Thioalkalivibrio sulfidiphilus (strain HL-EbGR7).